Here is a 422-residue protein sequence, read N- to C-terminus: Keratin, type II cytoskeletal 80 (422 aa).

The tract at residues 1 to 82 is head; that stretch reads MACRSCVVGF…DPAIQQQKNN (82 aa). Ser-45 is subject to Phosphoserine. The segment at 83–118 is coil 1A; it reads EKEEMKVLNDKFASLIGKVQALEQRNQLLETRWHFL. Residues 83–394 enclose the IF rod domain; that stretch reads EKEEMKVLND…KLMEGEESRM (312 aa). The tract at residues 119–135 is linker 1; it reads QSQDSATFDLGHLYEEY. The segment at 136–227 is coil 1B; that stretch reads QGRLQEELRK…SIYEQELKDL (92 aa). Positions 228-251 are linker 12; that stretch reads AAQLKDVSVTVGMDSRCHIDLSGI. The interval 252 to 390 is coil 2; sequence VEEVKAQYDA…ATYRKLMEGE (139 aa). The tract at residues 391 to 422 is tail; sequence ESRMDMPSATVVSAVQARCRTAPTLPHPLCSL.

It belongs to the intermediate filament family. In terms of assembly, heterotetramer of two type I and two type II keratins.

The sequence is that of Keratin, type II cytoskeletal 80 (KRT80) from Bos taurus (Bovine).